A 668-amino-acid polypeptide reads, in one-letter code: Phosphoglycerate transport system sensor protein PgtB (668 aa).

2 helical membrane-spanning segments follow: residues 20 to 40 (GAFL…LYSW) and 342 to 362 (LILV…HYFI). The HAMP domain occupies 364 to 416 (SRLVKRFTALNQAVVQIGLGRTDSTIPVYGRDELGRIARLLRHTLGQLNMQRR). The region spanning 454 to 663 (TLAHEINQPL…CVVLQFSVTD (210 aa)) is the Histidine kinase domain. The residue at position 457 (histidine 457) is a Phosphohistidine; by autocatalysis.

The protein resides in the cell inner membrane. It carries out the reaction ATP + protein L-histidine = ADP + protein N-phospho-L-histidine.. In terms of biological role, member of the two-component regulatory system PgtB/PgtA that regulates the inducible phosphoglycerate transport system. Activates PgtA by phosphorylation. This Salmonella typhimurium (strain LT2 / SGSC1412 / ATCC 700720) protein is Phosphoglycerate transport system sensor protein PgtB (pgtB).